The chain runs to 569 residues: Urease subunit alpha (569 aa).

In terms of domain architecture, Urease spans 131–569 (GGIDTHIHFI…LPLAQRYLLL (439 aa)). Histidine 136, histidine 138, and lysine 219 together coordinate Ni(2+). The residue at position 219 (lysine 219) is an N6-carboxylysine. Residue histidine 221 participates in substrate binding. Ni(2+) contacts are provided by histidine 248 and histidine 274. Histidine 322 (proton donor) is an active-site residue. Residue aspartate 362 participates in Ni(2+) binding.

The protein belongs to the metallo-dependent hydrolases superfamily. Urease alpha subunit family. In terms of assembly, heterotrimer of UreA (gamma), UreB (beta) and UreC (alpha) subunits. Three heterotrimers associate to form the active enzyme. The cofactor is Ni cation. In terms of processing, carboxylation allows a single lysine to coordinate two nickel ions.

It localises to the cytoplasm. The enzyme catalyses urea + 2 H2O + H(+) = hydrogencarbonate + 2 NH4(+). The protein operates within nitrogen metabolism; urea degradation; CO(2) and NH(3) from urea (urease route): step 1/1. The sequence is that of Urease subunit alpha from Synechococcus sp. (strain CC9605).